The sequence spans 319 residues: Protoheme IX farnesyltransferase (319 aa).

The next 8 membrane-spanning stretches (helical) occupy residues 59 to 79 (IGLI…AGAF), 108 to 128 (EALV…WFGA), 131 to 151 (LSAW…TIIL), 158 to 178 (NIVW…AAVT), 183 to 203 (WPAI…YWPL), 232 to 252 (VVLY…AGGA), 254 to 274 (WVYT…SHAL), and 299 to 319 (LTLL…VIGG).

The protein belongs to the UbiA prenyltransferase family. Protoheme IX farnesyltransferase subfamily.

The protein localises to the cell membrane. The enzyme catalyses heme b + (2E,6E)-farnesyl diphosphate + H2O = Fe(II)-heme o + diphosphate. The protein operates within porphyrin-containing compound metabolism; heme O biosynthesis; heme O from protoheme: step 1/1. Its function is as follows. Converts heme B (protoheme IX) to heme O by substitution of the vinyl group on carbon 2 of heme B porphyrin ring with a hydroxyethyl farnesyl side group. This chain is Protoheme IX farnesyltransferase, found in Pseudarthrobacter chlorophenolicus (strain ATCC 700700 / DSM 12829 / CIP 107037 / JCM 12360 / KCTC 9906 / NCIMB 13794 / A6) (Arthrobacter chlorophenolicus).